A 381-amino-acid chain; its full sequence is Succinyl-diaminopimelate desuccinylase (381 aa).

Zn(2+) is bound at residue His-72. Residue Asp-74 is part of the active site. Asp-105 is a binding site for Zn(2+). The active-site Proton acceptor is the Glu-139. Positions 140, 168, and 354 each coordinate Zn(2+).

Belongs to the peptidase M20A family. DapE subfamily. As to quaternary structure, homodimer. Zn(2+) is required as a cofactor. It depends on Co(2+) as a cofactor.

The enzyme catalyses N-succinyl-(2S,6S)-2,6-diaminopimelate + H2O = (2S,6S)-2,6-diaminopimelate + succinate. Its pathway is amino-acid biosynthesis; L-lysine biosynthesis via DAP pathway; LL-2,6-diaminopimelate from (S)-tetrahydrodipicolinate (succinylase route): step 3/3. Functionally, catalyzes the hydrolysis of N-succinyl-L,L-diaminopimelic acid (SDAP), forming succinate and LL-2,6-diaminopimelate (DAP), an intermediate involved in the bacterial biosynthesis of lysine and meso-diaminopimelic acid, an essential component of bacterial cell walls. This is Succinyl-diaminopimelate desuccinylase from Shewanella sp. (strain MR-4).